The chain runs to 500 residues: Probable cytosol aminopeptidase (500 aa).

Mn(2+) contacts are provided by lysine 268 and aspartate 273. Lysine 280 is an active-site residue. Mn(2+) is bound by residues aspartate 291, aspartate 350, and glutamate 352. Arginine 354 is an active-site residue.

This sequence belongs to the peptidase M17 family. Mn(2+) is required as a cofactor.

It localises to the cytoplasm. It catalyses the reaction Release of an N-terminal amino acid, Xaa-|-Yaa-, in which Xaa is preferably Leu, but may be other amino acids including Pro although not Arg or Lys, and Yaa may be Pro. Amino acid amides and methyl esters are also readily hydrolyzed, but rates on arylamides are exceedingly low.. It carries out the reaction Release of an N-terminal amino acid, preferentially leucine, but not glutamic or aspartic acids.. Its function is as follows. Presumably involved in the processing and regular turnover of intracellular proteins. Catalyzes the removal of unsubstituted N-terminal amino acids from various peptides. This chain is Probable cytosol aminopeptidase, found in Aromatoleum aromaticum (strain DSM 19018 / LMG 30748 / EbN1) (Azoarcus sp. (strain EbN1)).